We begin with the raw amino-acid sequence, 458 residues long: MVNLRNAVHSFLVHLIGLLVWQCDISVSPVAAIVTDIFNTSDGGRFKFPDGVQNWPALSIVVIIIMTIGGNILVIMAVSMEKKLHNATNYFLMSLAIADMLVGLLVMPLSLLAILYDYVWPLPRYLCPVWISLDVLFSTASIMHLCAISLDRYVAIRNPIEHSRFNSRTKAIMKIAIVWAISIGVSVPIPVIGLRDERKVFVNNTTCVLNDPNFVLIGSFVAFFIPLTIMVITYCLTIYVLRRQALMLLHGHTEEPPGLSLDFLKCCKRNTAEEENSANPNQDQNARRRKKKERRPRGTMQAINNERKASKVLGIVFFVFLIMWCPFFITNILSVLCEKSCNQKLMEKLLNVFVWIGYVCSGINPLVYTLFNKIYRRAFSNYLRCNYKVEKKPPVRQIPRVAATALSGRELNVNIYRHTNEPVIEKASDNEPGIEMQVENLELPVNPSSVVSERISSV.

The first 32 residues, 1–32 (MVNLRNAVHSFLVHLIGLLVWQCDISVSPVAA), serve as a signal peptide directing secretion. Topologically, residues 33–55 (IVTDIFNTSDGGRFKFPDGVQNW) are extracellular. Residues 56-80 (PALSIVVIIIMTIGGNILVIMAVSM) traverse the membrane as a helical segment. Over 81 to 86 (EKKLHN) the chain is Cytoplasmic. Residues 87 to 111 (ATNYFLMSLAIADMLVGLLVMPLSL) form a helical membrane-spanning segment. At 112–128 (LAILYDYVWPLPRYLCP) the chain is on the extracellular side. A disulfide bridge links Cys127 with Cys207. A helical transmembrane segment spans residues 129-151 (VWISLDVLFSTASIMHLCAISLD). Residue Thr139 participates in ergotamine binding. Positions 151 to 153 (DRY) match the DRY motif; important for ligand-induced conformation changes motif. Residues 152-167 (RYVAIRNPIEHSRFNS) lie on the Cytoplasmic side of the membrane. The helical transmembrane segment at 168–189 (RTKAIMKIAIVWAISIGVSVPI) threads the bilayer. Over 190-213 (PVIGLRDERKVFVNNTTCVLNDPN) the chain is Extracellular. Residue Leu209 participates in ergotamine binding. Residues 214–236 (FVLIGSFVAFFIPLTIMVITYCL) form a helical membrane-spanning segment. The Cytoplasmic segment spans residues 237–311 (TIYVLRRQAL…AINNERKASK (75 aa)). A disordered region spans residues 274-301 (EENSANPNQDQNARRRKKKERRPRGTMQ). Residues 287 to 297 (RRRKKKERRPR) show a composition bias toward basic residues. Residues 312–336 (VLGIVFFVFLIMWCPFFITNILSVL) form a helical membrane-spanning segment. Cys337 and Cys341 form a disulfide bridge. Residues 337–347 (CEKSCNQKLME) are Extracellular-facing. The chain crosses the membrane as a helical span at residues 348 to 370 (KLLNVFVWIGYVCSGINPLVYTL). The short motif at 364–368 (NPLVY) is the NPxxY motif; important for ligand-induced conformation changes and signaling element. The Cytoplasmic portion of the chain corresponds to 371–458 (FNKIYRRAFS…SVVSERISSV (88 aa)). Positions 456–458 (SSV) match the PDZ-binding motif.

The protein belongs to the G-protein coupled receptor 1 family. Interacts with MPDZ. Interacts with ARRB2. Interacts with MPP3; this interaction stabilizes the receptor at the plasma membrane and prevents the desensitization of the HTR2C receptor-mediated calcium response.

Its subcellular location is the cell membrane. Its function is as follows. G-protein coupled receptor for 5-hydroxytryptamine (serotonin). Also functions as a receptor for various drugs and psychoactive substances, including ergot alkaloid derivatives, 1-2,5,-dimethoxy-4-iodophenyl-2-aminopropane (DOI) and lysergic acid diethylamide (LSD). Ligand binding causes a conformation change that triggers signaling via guanine nucleotide-binding proteins (G proteins) and modulates the activity of downstream effectors. HTR2C is coupled to G(q)/G(11) G alpha proteins and activates phospholipase C-beta, releasing diacylglycerol (DAG) and inositol 1,4,5-trisphosphate (IP3) second messengers that modulate the activity of phosphatidylinositol 3-kinase and promote the release of Ca(2+) ions from intracellular stores, respectively. Beta-arrestin family members inhibit signaling via G proteins and mediate activation of alternative signaling pathways. Regulates neuronal activity via the activation of short transient receptor potential calcium channels in the brain, and thereby modulates the activation of pro-opiomelanocortin neurons and the release of CRH that then regulates the release of corticosterone. Plays a role in the regulation of appetite and eating behavior, responses to anxiogenic stimuli and stress. Plays a role in insulin sensitivity and glucose homeostasis. In Pan troglodytes (Chimpanzee), this protein is 5-hydroxytryptamine receptor 2C.